Here is a 220-residue protein sequence, read N- to C-terminus: Redox-sensing transcriptional repressor Rex (220 aa).

The H-T-H motif DNA-binding region spans 25 to 64 (WYLSNVKLLKQKGERYVSSTQISKEINIDASQIAKDLSYV). Position 99–104 (99–104 (GVGSLG)) interacts with NAD(+).

This sequence belongs to the transcriptional regulatory Rex family. Homodimer.

It localises to the cytoplasm. Functionally, modulates transcription in response to changes in cellular NADH/NAD(+) redox state. This is Redox-sensing transcriptional repressor Rex from Bacteroides fragilis (strain ATCC 25285 / DSM 2151 / CCUG 4856 / JCM 11019 / LMG 10263 / NCTC 9343 / Onslow / VPI 2553 / EN-2).